We begin with the raw amino-acid sequence, 349 residues long: Holliday junction branch migration complex subunit RuvB (349 aa).

A large ATPase domain (RuvB-L) region spans residues 1–185 (MSQEKERLIS…FGSIFRLDFY (185 aa)). Residues Leu24, Arg25, Gly66, Lys69, Thr70, Thr71, 132-134 (EDY), Arg175, Tyr185, and Arg222 contribute to the ATP site. Residue Thr70 coordinates Mg(2+). Positions 186–256 (DEEAIHDIVR…IAAESLACLE (71 aa)) are small ATPAse domain (RuvB-S). Positions 259-349 (KLGLDEIDHK…QQGLWTENGS (91 aa)) are head domain (RuvB-H). DNA contacts are provided by Arg314 and Arg319.

Belongs to the RuvB family. Homohexamer. Forms an RuvA(8)-RuvB(12)-Holliday junction (HJ) complex. HJ DNA is sandwiched between 2 RuvA tetramers; dsDNA enters through RuvA and exits via RuvB. An RuvB hexamer assembles on each DNA strand where it exits the tetramer. Each RuvB hexamer is contacted by two RuvA subunits (via domain III) on 2 adjacent RuvB subunits; this complex drives branch migration. In the full resolvosome a probable DNA-RuvA(4)-RuvB(12)-RuvC(2) complex forms which resolves the HJ.

The protein resides in the cytoplasm. The catalysed reaction is ATP + H2O = ADP + phosphate + H(+). The RuvA-RuvB-RuvC complex processes Holliday junction (HJ) DNA during genetic recombination and DNA repair, while the RuvA-RuvB complex plays an important role in the rescue of blocked DNA replication forks via replication fork reversal (RFR). RuvA specifically binds to HJ cruciform DNA, conferring on it an open structure. The RuvB hexamer acts as an ATP-dependent pump, pulling dsDNA into and through the RuvAB complex. RuvB forms 2 homohexamers on either side of HJ DNA bound by 1 or 2 RuvA tetramers; 4 subunits per hexamer contact DNA at a time. Coordinated motions by a converter formed by DNA-disengaged RuvB subunits stimulates ATP hydrolysis and nucleotide exchange. Immobilization of the converter enables RuvB to convert the ATP-contained energy into a lever motion, pulling 2 nucleotides of DNA out of the RuvA tetramer per ATP hydrolyzed, thus driving DNA branch migration. The RuvB motors rotate together with the DNA substrate, which together with the progressing nucleotide cycle form the mechanistic basis for DNA recombination by continuous HJ branch migration. Branch migration allows RuvC to scan DNA until it finds its consensus sequence, where it cleaves and resolves cruciform DNA. The polypeptide is Holliday junction branch migration complex subunit RuvB (Dehalococcoides mccartyi (strain CBDB1)).